A 406-amino-acid chain; its full sequence is MNEYSLFTSESVSEGHPDKIADQISDAVLDAIIARDKQARVACETMVKTGVAIVAGEITTSAWVDLEDLVRRVINDIGYTSSDVGFDGNTCGVLNLIGKQSVDIAQGVDRSKPEDQGAGDQGLMFGYATNETDSYMPAPIHYSHRLVERQAELRKHGLLPWLRPDAKSQLTFRYDAQGKPCAVDAVVLSTQHDPDIDQDELREMVKREIIEEVIPAEWLTETTKYHINPTGNFVIGGPVGDCGLTGRKIIVDTYGGMARHGGGAFSGKDPSKVDRSAAYAGRYVAKNVVAAGLAERCEIQVSYAIGVAEPTSVSVDTFGTGKISDAKIVELVREHFDLRPNAITRMLDLLHPMYQLTAAYGHFGREPFETSYTWTDVGGKQHVETFTAFPWEKTDRADALRQAAGL.

Position 16 (H16) interacts with ATP. Residue D18 coordinates Mg(2+). A K(+)-binding site is contributed by E44. Residues E57 and Q100 each contribute to the L-methionine site. The interval 100-110 (QSVDIAQGVDR) is flexible loop. Residues 165–167 (DAK), D241, 247–248 (RK), A264, and K268 contribute to the ATP site. Residue D241 participates in L-methionine binding. An L-methionine-binding site is contributed by K272.

The protein belongs to the AdoMet synthase family. Homotetramer; dimer of dimers. Mg(2+) serves as cofactor. It depends on K(+) as a cofactor.

It localises to the cytoplasm. It catalyses the reaction L-methionine + ATP + H2O = S-adenosyl-L-methionine + phosphate + diphosphate. It participates in amino-acid biosynthesis; S-adenosyl-L-methionine biosynthesis; S-adenosyl-L-methionine from L-methionine: step 1/1. Its function is as follows. Catalyzes the formation of S-adenosylmethionine (AdoMet) from methionine and ATP. The overall synthetic reaction is composed of two sequential steps, AdoMet formation and the subsequent tripolyphosphate hydrolysis which occurs prior to release of AdoMet from the enzyme. This Chromohalobacter salexigens (strain ATCC BAA-138 / DSM 3043 / CIP 106854 / NCIMB 13768 / 1H11) protein is S-adenosylmethionine synthase.